The chain runs to 282 residues: 4-diphosphocytidyl-2-C-methyl-D-erythritol kinase (282 aa).

The active site involves Lys13. Residue 96-106 (PMGGGIGGGSS) participates in ATP binding. Residue Asp138 is part of the active site.

The protein belongs to the GHMP kinase family. IspE subfamily.

The catalysed reaction is 4-CDP-2-C-methyl-D-erythritol + ATP = 4-CDP-2-C-methyl-D-erythritol 2-phosphate + ADP + H(+). It participates in isoprenoid biosynthesis; isopentenyl diphosphate biosynthesis via DXP pathway; isopentenyl diphosphate from 1-deoxy-D-xylulose 5-phosphate: step 3/6. Functionally, catalyzes the phosphorylation of the position 2 hydroxy group of 4-diphosphocytidyl-2C-methyl-D-erythritol. The polypeptide is 4-diphosphocytidyl-2-C-methyl-D-erythritol kinase (Pseudomonas syringae pv. syringae (strain B728a)).